We begin with the raw amino-acid sequence, 188 residues long: Elongation factor P (188 aa).

This sequence belongs to the elongation factor P family.

The protein localises to the cytoplasm. It functions in the pathway protein biosynthesis; polypeptide chain elongation. In terms of biological role, involved in peptide bond synthesis. Stimulates efficient translation and peptide-bond synthesis on native or reconstituted 70S ribosomes in vitro. Probably functions indirectly by altering the affinity of the ribosome for aminoacyl-tRNA, thus increasing their reactivity as acceptors for peptidyl transferase. This is Elongation factor P from Rhodopseudomonas palustris (strain BisB5).